We begin with the raw amino-acid sequence, 588 residues long: Putative pentatricopeptide repeat-containing protein At5g52630 (588 aa).

PPR repeat units lie at residues 14-48 (NYNQ…GLSL), 49-79 (IPLV…SPQK), 80-114 (SSTT…NLRP), 115-149 (DDHV…GYDA), 150-180 (DVFV…MPQR), 181-215 (NVVT…NLAV), 216-250 (NDYS…SFDS), 251-281 (SSFV…VPVK), 282-316 (NLGI…GMKP), 317-351 (NFIT…RIEP), and 352-386 (TDKH…PTES). Positions 387–462 (VWGALLTSCT…ETGLSWVEER (76 aa)) are type E motif. Positions 463–493 (NKVHTFAAGERRHEKSKEIYEKLAELGEEME) are type E(+) motif. The tract at residues 494 to 588 (KAGYIADTSY…DGKCSCNDYW (95 aa)) is type DYW motif.

The protein belongs to the PPR family. PCMP-H subfamily.

In Arabidopsis thaliana (Mouse-ear cress), this protein is Putative pentatricopeptide repeat-containing protein At5g52630 (PCMP-H52).